A 757-amino-acid chain; its full sequence is MTTLHILGFPRVGAKRELKFAQERYWRKELAEQDLLDLAKALREKNWLHQAQADADFVTVGDFTFYDHILDLQVATGAIPARFGFDSQTLSLDQYFQLARGNKEQFAIEMTKWFDTNYHYLVPEFQKNTTFKANPTHYVNQIREAKAAGHQVKPVIVGPLTFLWLGKEKGEAFNRFDLLKQLVPIYFEILTALAAEGVEWIQIDEPALALDLPQEWLAAYQDVYAQLAKVNAKLLLATYFGSVAEHADLLKALPVDGLHLDLVRAPEQLSAFEDYPKVLSAGVIDGRNIWRANLNRVLDVLEPLKAKFNQRLWIAPSCSLLHTPYDLAVETQLQQNNPELYRWLAFTLQKVAELQVLKQALNAGRDAVTEQLNDSQTAADARANSNVIHKAEVAQRLANLPANADKRQSPFAERIKLQNKWLNLPLLPTTNIGSFPQTLEIRHARAAFKKGELSLADYEAAMKKEIEFVVRKQEELDLDVLVHGEGERNDMVEYFGELLDGFAFTKFGWVQSYGSRCVKPPVIYGDVTRPEPMTVRWSQYAQSLTDKVMKGMLTGPVTILQWSFVRNDIPRSTVCKQIGVALSDEVLDLEKAGIKVIQIDEPAIREGLPLKRADWDAYLQWAGEAFRLSYMGVKDDTQIHTHMCYSEFNDILPAIAGLDADVITIETSRSDMELLTAFADFKYPNDIGPGVYDIHSPRVPTAGEIEHLLRKALKVIPKERLWVNPDCGLKTRGWKETIEQLQVMVEVTKKLRAELAE.

5-methyltetrahydropteroyltri-L-glutamate-binding positions include 16–19 and K112; that span reads RELK. L-homocysteine is bound by residues 432-434 and E485; that span reads IGS. L-methionine contacts are provided by residues 432–434 and E485; that span reads IGS. Residues 516–517 and W562 contribute to the 5-methyltetrahydropteroyltri-L-glutamate site; that span reads RC. D600 contacts L-homocysteine. D600 contributes to the L-methionine binding site. E606 is a binding site for 5-methyltetrahydropteroyltri-L-glutamate. 3 residues coordinate Zn(2+): H642, C644, and E666. The Proton donor role is filled by H695. C727 serves as a coordination point for Zn(2+).

This sequence belongs to the vitamin-B12 independent methionine synthase family. It depends on Zn(2+) as a cofactor.

The enzyme catalyses 5-methyltetrahydropteroyltri-L-glutamate + L-homocysteine = tetrahydropteroyltri-L-glutamate + L-methionine. The protein operates within amino-acid biosynthesis; L-methionine biosynthesis via de novo pathway; L-methionine from L-homocysteine (MetE route): step 1/1. Its function is as follows. Catalyzes the transfer of a methyl group from 5-methyltetrahydrofolate to homocysteine resulting in methionine formation. The protein is 5-methyltetrahydropteroyltriglutamate--homocysteine methyltransferase of Actinobacillus pleuropneumoniae serotype 5b (strain L20).